The chain runs to 373 residues: Glutamine synthetase (373 aa).

A2 carries the N-acetylalanine modification. Residues 2 to 25 (ATSASSHLNKGIKQMYMSLPQGEK) are required for glutamine-induced ubiquitination by CRL4(CRBN) and proteasomal degradation. K11 and K14 each carry N6-acetyllysine. The GS beta-grasp domain occupies 24-106 (EKVQAMYIWV…VLCEVFKYNR (83 aa)). Y104 carries the post-translational modification Phosphotyrosine. One can recognise a GS catalytic domain in the interval 113–373 (LRHICKRIMD…TGDEPFQYKN (261 aa)). Residue E134 coordinates ATP. E134, E136, E196, and E203 together coordinate Mn(2+). ATP is bound at residue 203–208 (EFQIGP). 246–247 (NW) is a binding site for L-glutamate. H253 is a binding site for Mn(2+). Residues 255–257 (NFS), R319, and R324 contribute to the ATP site. R319 contributes to the L-glutamate binding site. 336 to 338 (YFE) contacts ADP. E338 is a binding site for Mn(2+). R340 is an L-glutamate binding site. S343 is subject to Phosphoserine.

The protein belongs to the glutamine synthetase family. In terms of assembly, decamer; composed of two pentamers. Interacts with PALMD. Interacts with RHOJ. Interacts with BEST2; this interaction tethers a fraction of GLUL to the membrane, causing a decrease of cytosolic glutamine synthase (GS) activity and inhibits the chloride channel activity of BEST2 by affecting the gating at the aperture in the absence of intracellular glutamate. It depends on Mg(2+) as a cofactor. Mn(2+) serves as cofactor. Post-translationally, acetylated by EP300/p300; acetylation is stimulated by increased glutamine levels and promotes ubiquitin-mediated proteasomal degradation. In terms of processing, palmitoylated; undergoes autopalmitoylation. Ubiquitinated by ZNRF1. Ubiquitinated by the DCX (DDB1-CUL4-X-box) E3 ubiquitin-protein ligase complex called CRL4(CRBN), leading to proteasomal degradation. In terms of tissue distribution, expressed in microvascular endothelial cells.

It localises to the cytoplasm. It is found in the cytosol. Its subcellular location is the microsome. The protein resides in the mitochondrion. The protein localises to the cell membrane. It carries out the reaction L-glutamate + NH4(+) + ATP = L-glutamine + ADP + phosphate + H(+). It catalyses the reaction L-cysteinyl-[protein] + hexadecanoyl-CoA = S-hexadecanoyl-L-cysteinyl-[protein] + CoA. With respect to regulation, glutamine synthetase activity is inhibited by methionine sulfoximine (MSO). Glutamine synthetase that catalyzes the ATP-dependent conversion of glutamate and ammonia to glutamine. Its role depends on tissue localization: in the brain, it regulates the levels of toxic ammonia and converts neurotoxic glutamate to harmless glutamine, whereas in the liver, it is one of the enzymes responsible for the removal of ammonia. Plays a key role in ammonium detoxification during erythropoiesis: the glutamine synthetase activity is required to remove ammonium generated by porphobilinogen deaminase (HMBS) during heme biosynthesis to prevent ammonium accumulation and oxidative stress. Essential for proliferation of fetal skin fibroblasts. Independently of its glutamine synthetase activity, required for endothelial cell migration during vascular development. Involved in angiogenesis by regulating membrane localization and activation of the GTPase RHOJ, possibly by promoting RHOJ palmitoylation. May act as a palmitoyltransferase for RHOJ: able to autopalmitoylate and then transfer the palmitoyl group to RHOJ. Plays a role in ribosomal 40S subunit biogenesis. Through the interaction with BEST2, inhibits BEST2 channel activity by affecting the gating at the aperture in the absence of intracellular L-glutamate, but sensitizes BEST2 to intracellular L-glutamate, which promotes the opening of BEST2 and thus relieves its inhibitory effect on BEST2. The sequence is that of Glutamine synthetase from Mus musculus (Mouse).